A 698-amino-acid polypeptide reads, in one-letter code: G1/S-specific cyclin CCN1 (698 aa).

A compositionally biased stretch (low complexity) spans 1–11 (MTSLQQQQQQQ). Disordered regions lie at residues 1–21 (MTSL…PHHI), 277–326 (QKKQ…DDED), 469–577 (DEDE…GSIL), 599–619 (SNSS…EKRY), and 659–698 (NNTN…QYHQ). A compositionally biased stretch (polar residues) spans 277 to 302 (QKKQKKAFSSNSSRTTTASYTHQNQS). Composition is skewed to acidic residues over residues 310 to 326 (DEDI…DDED) and 469 to 480 (DEDENVSTDDEA). Polar residues-rich tracts occupy residues 493-520 (DGNN…NHPQ) and 528-567 (PSAT…SSFA). The span at 659 to 669 (NNTNSSSPLMN) shows a compositional bias: polar residues. The segment covering 670–690 (QQQQYYHQQQHQQQVTQSSLY) has biased composition (low complexity).

It belongs to the cyclin family.

Its function is as follows. Essential for the control of the cell cycle at the G1/S (start) transition. Interacts with the CDC2 protein kinase to form MPF. The sequence is that of G1/S-specific cyclin CCN1 (CCN1) from Candida albicans (strain WO-1) (Yeast).